The following is a 188-amino-acid chain: PRA1 family protein 3 (188 aa).

At Met-1 the chain carries N-acetylmethionine. The Cytoplasmic segment spans residues 1–35 (MDVNIAPLRAWDDFFPGSDRFARPDFRDISKWNNR). Helical transmembrane passes span 36 to 56 (VVSNLLYYQTNYLVVAAMMIS) and 57 to 77 (VVGFLSPFNMILGGIVVVLVF). At 78 to 93 (TGFVWAAHNKDILRRL) the chain is on the cytoplasmic side. Helical transmembrane passes span 94–114 (KKQYPTVFVMVVMLASYFLIS) and 115–135 (MFGGVMVFVFGITFPLLLMFI). Positions 103–117 (MVVMLASYFLISMFG) are required for homodimer formation and heterodimer formation with ARL6IP1. Over 136-188 (HASLRLRNLKNKLENKIEGIGLKRTPMGIVLDALEQQEENISKFADYISKVNE) the chain is Cytoplasmic. The tract at residues 136 to 188 (HASLRLRNLKNKLENKIEGIGLKRTPMGIVLDALEQQEENISKFADYISKVNE) is targeting to endoplasmic reticulum membrane.

It belongs to the PRA1 family. Homodimer. Heterodimer with ARL6IP1. Forms multimers. Interacts with ARL6. Interacts with prenylated RAB1A and RAB3A. Interacts with SLC1A1/EAAC1. Interacts with RTN2 (via first transmembrane domain). Does not interact with VAMP1, VAMP2 or VAMP3.

Its subcellular location is the endoplasmic reticulum membrane. The protein localises to the cell membrane. The protein resides in the cytoplasm. It localises to the cytoskeleton. Functionally, regulates intracellular concentrations of taurine and glutamate. Negatively modulates SLC1A1/EAAC1 glutamate transport activity by decreasing its affinity for glutamate in a PKC activity-dependent manner. Plays a role in the retention of SLC1A1/EAAC1 in the endoplasmic reticulum. This is PRA1 family protein 3 (ARL6IP5) from Sus scrofa (Pig).